We begin with the raw amino-acid sequence, 235 residues long: Orotidine 5'-phosphate decarboxylase (235 aa).

Substrate is bound by residues aspartate 10, lysine 33, 60-69 (DLKMSDIPNT), threonine 123, arginine 185, glutamine 194, glycine 214, and arginine 215. Lysine 62 serves as the catalytic Proton donor.

The protein belongs to the OMP decarboxylase family. Type 1 subfamily. In terms of assembly, homodimer.

The catalysed reaction is orotidine 5'-phosphate + H(+) = UMP + CO2. It functions in the pathway pyrimidine metabolism; UMP biosynthesis via de novo pathway; UMP from orotate: step 2/2. Its function is as follows. Catalyzes the decarboxylation of orotidine 5'-monophosphate (OMP) to uridine 5'-monophosphate (UMP). This is Orotidine 5'-phosphate decarboxylase from Lactobacillus gasseri (strain ATCC 33323 / DSM 20243 / BCRC 14619 / CIP 102991 / JCM 1131 / KCTC 3163 / NCIMB 11718 / NCTC 13722 / AM63).